The following is a 1661-amino-acid chain: Beta/gamma crystallin domain-containing protein 2 (1661 aa).

Disordered stretches follow at residues 72-135 (EEET…PPCV), 148-168 (PGPR…SSRS), 242-268 (VPAG…GLGS), 297-321 (PASA…GRAP), 337-380 (STEL…THPG), 411-757 (EHVT…EEDE), 808-871 (LGPW…VSCS), and 883-903 (TKGP…PTSR). Residues 105 to 118 (PKEKRPEGRLKEAV) show a composition bias toward basic and acidic residues. Polar residues predominate over residues 337–353 (STELPLQTSQGQASVPS). Low complexity predominate over residues 431 to 442 (PSPGGLSAPSSP). Polar residues-rich tracts occupy residues 507–519 (SSPT…QGSS), 628–644 (PKST…SSIQ), and 685–697 (SEGS…TQKE). Positions 706–719 (PAPSSSVDRVSPSP) are enriched in low complexity. Positions 731–750 (EASTESQLVSDPTEGKTCTE) are enriched in polar residues. A compositionally biased stretch (acidic residues) spans 825–835 (EKEEEEEEEPE). Residues 841 to 851 (DDEKLQRRQEK) show a composition bias toward basic and acidic residues. 12 consecutive Beta/gamma crystallin 'Greek key' domains span residues 986–1023 (GKVI…RVVR), 1024–1067 (GCWV…RRVV), 1073–1113 (PEIS…TVSA), 1114–1156 (GLWL…KPMR), 1168–1213 (PRAV…RVLG), 1214–1256 (GCWV…RVIR), 1262–1302 (PAVV…HVLS), 1303–1345 (GVWV…QPVL), 1356–1393 (SKIQ…RVHG), 1394–1437 (GSWI…QKVS), 1443–1483 (PSIF…RIKG), and 1484–1525 (GIWV…YPIK). Residues 1569-1659 (WYYEDGLLKN…DRASQIWTIH (91 aa)) form the Ricin B-type lectin domain.

Belongs to the beta/gamma-crystallin family.

In Homo sapiens (Human), this protein is Beta/gamma crystallin domain-containing protein 2.